The primary structure comprises 323 residues: Fructose-1,6-bisphosphatase class 1 (323 aa).

Glu-88, Asp-107, Leu-109, and Asp-110 together coordinate Mg(2+). Substrate is bound by residues 110 to 113 (DGSS) and Asn-200. Glu-272 is a Mg(2+) binding site.

It belongs to the FBPase class 1 family. Homotetramer. The cofactor is Mg(2+).

It localises to the cytoplasm. The enzyme catalyses beta-D-fructose 1,6-bisphosphate + H2O = beta-D-fructose 6-phosphate + phosphate. Its pathway is carbohydrate biosynthesis; gluconeogenesis. The polypeptide is Fructose-1,6-bisphosphatase class 1 (Acinetobacter baylyi (strain ATCC 33305 / BD413 / ADP1)).